Here is a 180-residue protein sequence, read N- to C-terminus: MSRIGKLPIKIADSVKVDIKDNFITVEGKRGKLSQEINSSIRVKIEDNNIIVERAFNDKQTRAFHGLYRSLIFNMVKGVSDGFSKSLTINGIGYRVEQQGNSLFFNLGYSTQFEYVIPEGINIRLDGNTKIAVEGIDKCRVGQVAAEIRSLKVPEPYKGKGIKYDNEVIRRKVGKSGVKK.

This sequence belongs to the universal ribosomal protein uL6 family. As to quaternary structure, part of the 50S ribosomal subunit.

In terms of biological role, this protein binds to the 23S rRNA, and is important in its secondary structure. It is located near the subunit interface in the base of the L7/L12 stalk, and near the tRNA binding site of the peptidyltransferase center. In Borrelia duttonii (strain Ly), this protein is Large ribosomal subunit protein uL6.